The following is an 867-amino-acid chain: Cadherin-related family member 1 (867 aa).

The N-terminal stretch at 1–21 is a signal peptide; sequence MKHEWNLCPSIFFSIFHICLS. The Extracellular segment spans residues 22-707; sequence VQTNYGPYFF…SKDNPMKALG (686 aa). 6 Cadherin domains span residues 39–138, 139–250, 251–357, 363–476, 477–580, and 572–692; these read NGNM…SPGF, LNTP…PPVF, VGTP…PPTF, PQNR…VPRF, SSEY…SPEF, and DIND…GPMA. The chain crosses the membrane as a helical span at residues 708 to 728; the sequence is VLAGVMAIMVVITIFISTAMF. The Cytoplasmic portion of the chain corresponds to 729-867; the sequence is WRNKKSNRVM…KNAGSSMSFY (139 aa). The tract at residues 777–825 is disordered; it reads EMESGPKNENRNNNYQGIPVPPRAPCPPPPPRLMPKVSKTERSLPTVSG. Over residues 795-809 the composition is skewed to pro residues; the sequence is PVPPRAPCPPPPPRL.

Expressed in photoreceptor cells of the outer nuclear layer of the retina and in the pinal gland.

It localises to the membrane. Its function is as follows. Potential calcium-dependent cell-adhesion protein. In Xenopus laevis (African clawed frog), this protein is Cadherin-related family member 1 (cdhr1).